We begin with the raw amino-acid sequence, 242 residues long: MSKSRLTVFSFVRRFLLRLMVVLAVFWGGGIALFSVAPVPFSAVMVERQVSAWLHGNFRYVAHSDWVSMDQISPWMGLAVIAAEDQKFPEHWGFDVASIEKALAHNERNENRIRGASTISQQTAKNLFLWDGRSWVRKGLEAGLTLGIETVWSKKRILTVYLNIAEFGDGVFGVEAAAQRYFHKPASKLTRSEAALLAAVLPNPLRFKVSSPSGYVRSRQAWILRQMYQLGGEPFMQQHQLD.

The chain crosses the membrane as a helical span at residues 19 to 39 (LMVVLAVFWGGGIALFSVAPV).

It belongs to the glycosyltransferase 51 family.

It localises to the cell inner membrane. It carries out the reaction [GlcNAc-(1-&gt;4)-Mur2Ac(oyl-L-Ala-gamma-D-Glu-L-Lys-D-Ala-D-Ala)](n)-di-trans,octa-cis-undecaprenyl diphosphate + beta-D-GlcNAc-(1-&gt;4)-Mur2Ac(oyl-L-Ala-gamma-D-Glu-L-Lys-D-Ala-D-Ala)-di-trans,octa-cis-undecaprenyl diphosphate = [GlcNAc-(1-&gt;4)-Mur2Ac(oyl-L-Ala-gamma-D-Glu-L-Lys-D-Ala-D-Ala)](n+1)-di-trans,octa-cis-undecaprenyl diphosphate + di-trans,octa-cis-undecaprenyl diphosphate + H(+). The protein operates within cell wall biogenesis; peptidoglycan biosynthesis. Its function is as follows. Peptidoglycan polymerase that catalyzes glycan chain elongation from lipid-linked precursors. In Escherichia coli O139:H28 (strain E24377A / ETEC), this protein is Biosynthetic peptidoglycan transglycosylase.